The chain runs to 593 residues: MSQQTEPDDDAALDGDEPGAYGKDERLRSREVTEGPERAPHRAMFRAMGYDDEDLSSPLIGVPNPAADITPCNVHLDDVAESALEGIDEAGGMPIEFGTITISDAISMGTEGMKASLISREVIADSVELVSFGERMDALVTVAGCDKNLPGMMMAAIRTDLPSVFLYGGSIMPGQHEGRDVTIVQVFEGVGAYAQGEMSGDELDDLERNACPGAGSCGGMFTANTMASLSEALGLAPLGSASPPAENHERYAVARRAGELAVEVVEEDRHPSDILTRTSFENAIALQTAMGGSTNAVLHLLALAAEAGIDLDIEDFDAISRRTPKIADLQPGGDRVMNDLHEIGGVPVVIRRLMEADLFDGSQLTVTGRTIEEELAHLESEHGLPTDDEIDADFLYPVDDPKEAEGAIKILTGNLAPDGAVLKVTGDDEFYHEGPARVFENEEDAMKYVQEGHIESGDVIVIRNEGPEGGPGMREMLGVTAAVVGAGHEDDVALLTDGRFSGGTRGPMIGHIAPEAFVGGPIGALEDGDHITVDIPDRTIEVDLSDSELERRLDERDDPEPAYTNGVVAKYGSLFGSAANGAVTNPGLHNDQH.

Over residues 1–17 the composition is skewed to acidic residues; that stretch reads MSQQTEPDDDAALDGDE. Residues 1–40 form a disordered region; it reads MSQQTEPDDDAALDGDEPGAYGKDERLRSREVTEGPERAP. Residues 22 to 40 are compositionally biased toward basic and acidic residues; it reads GKDERLRSREVTEGPERAP. Residue cysteine 72 coordinates [2Fe-2S] cluster. Residue aspartate 104 participates in Mg(2+) binding. Cysteine 145 lines the [2Fe-2S] cluster pocket. Residues aspartate 146 and lysine 147 each contribute to the Mg(2+) site. Lysine 147 is modified (N6-carboxylysine). Residue cysteine 217 coordinates [2Fe-2S] cluster. Glutamate 475 is a Mg(2+) binding site. The active-site Proton acceptor is the serine 501.

Belongs to the IlvD/Edd family. As to quaternary structure, homodimer. [2Fe-2S] cluster serves as cofactor. Mg(2+) is required as a cofactor.

It carries out the reaction (2R)-2,3-dihydroxy-3-methylbutanoate = 3-methyl-2-oxobutanoate + H2O. The catalysed reaction is (2R,3R)-2,3-dihydroxy-3-methylpentanoate = (S)-3-methyl-2-oxopentanoate + H2O. It participates in amino-acid biosynthesis; L-isoleucine biosynthesis; L-isoleucine from 2-oxobutanoate: step 3/4. Its pathway is amino-acid biosynthesis; L-valine biosynthesis; L-valine from pyruvate: step 3/4. Functions in the biosynthesis of branched-chain amino acids. Catalyzes the dehydration of (2R,3R)-2,3-dihydroxy-3-methylpentanoate (2,3-dihydroxy-3-methylvalerate) into 2-oxo-3-methylpentanoate (2-oxo-3-methylvalerate) and of (2R)-2,3-dihydroxy-3-methylbutanoate (2,3-dihydroxyisovalerate) into 2-oxo-3-methylbutanoate (2-oxoisovalerate), the penultimate precursor to L-isoleucine and L-valine, respectively. In Natronomonas pharaonis (strain ATCC 35678 / DSM 2160 / CIP 103997 / JCM 8858 / NBRC 14720 / NCIMB 2260 / Gabara) (Halobacterium pharaonis), this protein is Dihydroxy-acid dehydratase.